The primary structure comprises 1046 residues: MASSVGNVADSTEPTKRMLSFQGLAELAHREYQAGDFEAAERHCMQLWRQEPDNTGVLLLLSSIHFQCRRLDRSAHFSTLAIKQNPLLAEAYSNLGNVYKERGQLQEAIEHYRHALRLKPDFIDGYINLAAALVAAGDMEGAVQAYVSALQYNPDLYCVRSDLGNLLKALGRLEEAKACYLKAIETQPNFAVAWSNLGCVFNAQGEIWLAIHHFEKAVTLDPNFLDAYINLGNVLKEARIFDRAVAAYLRALSLSPNHAVVHGNLACVYYEQGLIDLAIDTYRRAIELQPHFPDAYCNLANALKEKGSVAEAEDCYNTALRLCPTHADSLNNLANIKREQGNIEEAVRLYRKALEVFPEFAAAHSNLASVLQQQGKLQEALMHYKEAIRISPTFADAYSNMGNTLKEMQDVQGALQCYTRAIQINPAFADAHSNLASIHKDSGNIPEAIASYRTALKLKPDFPDAYCNLAHCLQIVCDWTDYDERMKKLVSIVADQLEKNRLPSVHPHHSMLYPLSHGFRKAIAERHGNLCLDKINVLHKPPYEHPKDLKLSDGRLRVGYVSSDFGNHPTSHLMQSIPGMHNPDKFEVFCYALSPDDGTNFRVKVMAEANHFIDLSQIPCNGKAADRIHQDGIHILVNMNGYTKGARNELFALRPAPIQAMWLGYPGTSGALFMDYIITDQETSPAEVAEQYSEKLAYMPHTFFIGDHANMFPHLKKKAVIDFKSNGHIYDNRIVLNGIDLKAFLDSLPDVKIVKMKCPDGGDNADSSNTALNMPVIPMNTIAEAVIEMINRGQIQITINGFSISNGLATTQINNKAATGEEVPRTIIVTTRSQYGLPEDAIVYCNFNQLYKIDPSTLQMWANILKRVPNSVLWLLRFPAVGEPNIQQYAQNMGLPQNRIIFSPVAPKEEHVRRGQLADVCLDTPLCNGHTTGMDVLWAGTPMVTMPGETLASRVAASQLTCLGCLELIAKNRQEYEDIAVKLGTDLEYLKKIRGKVWKQRISSPLFNTKQYTMELERLYLQMWEHYAAGNKPDHMIKPVEVTESA.

At A2 the chain carries N-acetylalanine. Phosphoserine; by GSK3-beta; alternate is present on residues S3 and S4. 2 O-linked (GlcNAc) serine; alternate glycosylation sites follow: S3 and S4. The residue at position 20 (S20) is a Phosphoserine. TPR repeat units follow at residues 21–54 (FQGLAELAHREYQAGDFEAAERHCMQLWRQEPDN), 89–122 (AEAYSNLGNVYKERGQLQEAIEHYRHALRLKPDF), 123–156 (IDGYINLAAALVAAGDMEGAVQAYVSALQYNPDL), 157–190 (YCVRSDLGNLLKALGRLEEAKACYLKAIETQPNF), 191–224 (AVAWSNLGCVFNAQGEIWLAIHHFEKAVTLDPNF), 225–258 (LDAYINLGNVLKEARIFDRAVAAYLRALSLSPNH), 259–292 (AVVHGNLACVYYEQGLIDLAIDTYRRAIELQPHF), 293–326 (PDAYCNLANALKEKGSVAEAEDCYNTALRLCPTH), 327–360 (ADSLNNLANIKREQGNIEEAVRLYRKALEVFPEF), 361–394 (AAAHSNLASVLQQQGKLQEALMHYKEAIRISPTF), 395–428 (ADAYSNMGNTLKEMQDVQGALQCYTRAIQINPAF), and 429–462 (ADAHSNLASIHKDSGNIPEAIASYRTALKLKPDF). S399 carries an O-linked (GlcNAc) serine; by autocatalysis glycan. Position 454 is a phosphothreonine (T454). A TPR 13; truncated repeat occupies 463–473 (PDAYCNLAHCL). The short motif at 464 to 466 (DAY) is the DFP motif element. The Nuclear localization signal signature appears at 487 to 503 (KKLVSIVADQLEKNRLP). H508 serves as the catalytic Proton acceptor. UDP contacts are provided by residues Q849, K852, 906 to 908 (APK), 911 to 914 (HVRR), 930 to 932 (HTT), and D935. Position 989 is a phosphotyrosine (Y989). Residues 991–1010 (KKIRGKVWKQRISSPLFNTK) form a required for phosphatidylinositol 3,4,5-triphosphate binding region.

This sequence belongs to the glycosyltransferase 41 family. O-GlcNAc transferase subfamily. As to quaternary structure, monomer; may exist in different oligomerization states in cells. Homotrimer, oligomerizes via TPR repeats 6 and 7. Trimerization is not necessary for activity in vitro, however it increases affinity for UDP-GlcNAc. Component of a THAP1/THAP3-HCFC1-OGT complex. Component of the NSL complex at least composed of MOF/KAT8, KANSL1, KANSL2, KANSL3, MCRS1, PHF20, OGT1/OGT, WDR5 and HCFC1. Found in a complex with KIF5B, RHOT1, RHOT2 and TRAK1. Found in a complex composed of at least SINHCAF, SIN3A, HDAC1, SAP30, RBBP4, OGT and TET1. Component of a complex composed of KMT2E/MLL5, OGT and USP7; the complex stabilizes KMT2E/MLL5, preventing KMT2E/MLL5 ubiquitination and proteasomal-mediated degradation. Interacts (via TPRs 1-6) with SIN3A; the interaction mediates transcriptional repression in parallel with histone deacetylase. Interacts (via TPR 5-6) with TET1, TET2 and TET3. Interacts (via TPR repeats 6 and 7) with ATXN10. Interacts with NSD2. Interacts with PROSER1; this interaction mediates TET2 O-GlcNAcylation and stability by promoting the interaction between OGT and TET2. Post-translationally, ubiquitinated by the SCF(FBXO31) complex, leading to its proteasomal degradation. In terms of processing, phosphorylation on Ser-3 or Ser-4 by GSK3-beta positively regulates its activity. Phosphorylation at Thr-454 by AMPK promotes nuclear localization. Glycosylated via autocatalysis; O-GlcNAcylation at Ser-399 promotes nuclear localization.

The protein localises to the nucleus. The protein resides in the cytoplasm. It carries out the reaction L-seryl-[protein] + UDP-N-acetyl-alpha-D-glucosamine = 3-O-(N-acetyl-beta-D-glucosaminyl)-L-seryl-[protein] + UDP + H(+). It catalyses the reaction L-threonyl-[protein] + UDP-N-acetyl-alpha-D-glucosamine = 3-O-(N-acetyl-beta-D-glucosaminyl)-L-threonyl-[protein] + UDP + H(+). It functions in the pathway protein modification; protein glycosylation. With respect to regulation, inhibited by UDP. In terms of biological role, catalyzes the transfer of a single N-acetylglucosamine from UDP-GlcNAc to a serine or threonine residue in cytoplasmic and nuclear proteins resulting in their modification with a beta-linked N-acetylglucosamine (O-GlcNAc). Glycosylates a large and diverse number of proteins including histone H2B, AKT1, AMPK, ATG4B, CAPRIN1, EZH2, FNIP1, GSDMD, KRT7, LMNA, LMNB1, LMNB2, RPTOR, HOXA1, PFKL, KMT2E/MLL5, MAPT/TAU, TET2, RBL2, RET, NOD2 and HCFC1. Can regulate their cellular processes via cross-talk between glycosylation and phosphorylation or by affecting proteolytic processing. Involved in insulin resistance in muscle and adipocyte cells via glycosylating insulin signaling components and inhibiting the 'Thr-308' phosphorylation of AKT1, enhancing IRS1 phosphorylation and attenuating insulin signaling. Involved in glycolysis regulation by mediating glycosylation of 6-phosphofructokinase PFKL, inhibiting its activity. Plays a key role in chromatin structure by mediating O-GlcNAcylation of 'Ser-112' of histone H2B: recruited to CpG-rich transcription start sites of active genes via its interaction with TET proteins (TET1, TET2 or TET3). As part of the NSL complex indirectly involved in acetylation of nucleosomal histone H4 on several lysine residues. O-GlcNAcylation of 'Ser-75' of EZH2 increases its stability, and facilitating the formation of H3K27me3 by the PRC2/EED-EZH2 complex. Stabilizes KMT2E/MLL5 by mediating its glycosylation, thereby preventing KMT2E/MLL5 ubiquitination. Regulates circadian oscillation of the clock genes and glucose homeostasis in the liver. Stabilizes clock proteins BMAL1 and CLOCK through O-glycosylation, which prevents their ubiquitination and subsequent degradation. Promotes the CLOCK-BMAL1-mediated transcription of genes in the negative loop of the circadian clock such as PER1/2 and CRY1/2. O-glycosylates HCFC1 and regulates its proteolytic processing and transcriptional activity. Component of a THAP1/THAP3-HCFC1-OGT complex that is required for the regulation of the transcriptional activity of RRM1. Regulates mitochondrial motility in neurons by mediating glycosylation of TRAK1. Promotes autophagy by mediating O-glycosylation of ATG4B. Acts as a regulator of mTORC1 signaling by mediating O-glycosylation of RPTOR and FNIP1: O-GlcNAcylation of RPTOR in response to glucose sufficiency promotes activation of the mTORC1 complex. Its function is as follows. Catalyzes the transfer of a single N-acetylglucosamine from UDP-GlcNAc to a serine or threonine residue. Acts on cytoplasmic and nuclear proteins resulting in their modification with a beta-linked N-acetylglucosamine (O-GlcNAc). Glycosylates a large and diverse number of proteins including histone H2B, AKT1, ATG4B, EZH2, PFKL, KMT2E/MLL5, MAPT/TAU, NOD2 and HCFC1. Can regulate their cellular processes via cross-talk between glycosylation and phosphorylation or by affecting proteolytic processing. Probably by glycosylating KMT2E/MLL5, stabilizes KMT2E/MLL5 by preventing its ubiquitination. Involved in insulin resistance in muscle and adipocyte cells via glycosylating insulin signaling components and inhibiting the 'Thr-308' phosphorylation of AKT1, enhancing IRS1 phosphorylation and attenuating insulin signaling. Involved in glycolysis regulation by mediating glycosylation of 6-phosphofructokinase PFKL, inhibiting its activity. Component of a THAP1/THAP3-HCFC1-OGT complex that is required for the regulation of the transcriptional activity of RRM1. Plays a key role in chromatin structure by mediating O-GlcNAcylation of 'Ser-112' of histone H2B: recruited to CpG-rich transcription start sites of active genes via its interaction with TET proteins (TET1, TET2 or TET3). As part of the NSL complex indirectly involved in acetylation of nucleosomal histone H4 on several lysine residues. O-GlcNAcylation of 'Ser-75' of EZH2 increases its stability, and facilitating the formation of H3K27me3 by the PRC2/EED-EZH2 complex. Regulates circadian oscillation of the clock genes and glucose homeostasis in the liver. Stabilizes clock proteins BMAL1 and CLOCK through O-glycosylation, which prevents their ubiquitination and subsequent degradation. Promotes the CLOCK-BMAL1-mediated transcription of genes in the negative loop of the circadian clock such as PER1/2 and CRY1/2. O-glycosylates HCFC1 and regulates its proteolytic processing and transcriptional activity. Regulates mitochondrial motility in neurons by mediating glycosylation of TRAK1. Glycosylates HOXA1. O-glycosylates FNIP1. Promotes autophagy by mediating O-glycosylation of ATG4B. This Oryctolagus cuniculus (Rabbit) protein is UDP-N-acetylglucosamine--peptide N-acetylglucosaminyltransferase 110 kDa subunit (OGT).